The chain runs to 377 residues: Queuine tRNA-ribosyltransferase (377 aa).

Catalysis depends on aspartate 89, which acts as the Proton acceptor. Residues 89–93 (DSGGF), aspartate 143, glutamine 187, and glycine 214 contribute to the substrate site. An RNA binding region spans residues 245-251 (GVGKPED). Residue aspartate 264 is the Nucleophile of the active site. An RNA binding; important for wobble base 34 recognition region spans residues 269–273 (TRNAR). Zn(2+)-binding residues include cysteine 302, cysteine 304, cysteine 307, and histidine 333.

The protein belongs to the queuine tRNA-ribosyltransferase family. In terms of assembly, homodimer. Within each dimer, one monomer is responsible for RNA recognition and catalysis, while the other monomer binds to the replacement base PreQ1. Requires Zn(2+) as cofactor.

It carries out the reaction 7-aminomethyl-7-carbaguanine + guanosine(34) in tRNA = 7-aminomethyl-7-carbaguanosine(34) in tRNA + guanine. Its pathway is tRNA modification; tRNA-queuosine biosynthesis. Catalyzes the base-exchange of a guanine (G) residue with the queuine precursor 7-aminomethyl-7-deazaguanine (PreQ1) at position 34 (anticodon wobble position) in tRNAs with GU(N) anticodons (tRNA-Asp, -Asn, -His and -Tyr). Catalysis occurs through a double-displacement mechanism. The nucleophile active site attacks the C1' of nucleotide 34 to detach the guanine base from the RNA, forming a covalent enzyme-RNA intermediate. The proton acceptor active site deprotonates the incoming PreQ1, allowing a nucleophilic attack on the C1' of the ribose to form the product. After dissociation, two additional enzymatic reactions on the tRNA convert PreQ1 to queuine (Q), resulting in the hypermodified nucleoside queuosine (7-(((4,5-cis-dihydroxy-2-cyclopenten-1-yl)amino)methyl)-7-deazaguanosine). In Shewanella denitrificans (strain OS217 / ATCC BAA-1090 / DSM 15013), this protein is Queuine tRNA-ribosyltransferase.